Consider the following 95-residue polypeptide: Small ribosomal subunit protein bS20c (95 aa).

It belongs to the bacterial ribosomal protein bS20 family.

The protein resides in the plastid. The protein localises to the chloroplast. Functionally, binds directly to 16S ribosomal RNA. This chain is Small ribosomal subunit protein bS20c, found in Pyropia yezoensis (Susabi-nori).